The following is a 409-amino-acid chain: Astacin-like metalloendopeptidase (409 aa).

The N-terminal stretch at Met1–Gly19 is a signal peptide. The span at Thr30–Thr39 shows a compositional bias: low complexity. Positions Thr30–Asp54 are disordered. Positions Ser87–Ser285 constitute a Peptidase M12A domain. Intrachain disulfides connect Cys91–Cys94, Cys134–Cys284, Cys155–Cys175, Cys287–Cys313, and Cys339–Cys362. His183 serves as a coordination point for Zn(2+). The active site involves Glu184. Zn(2+)-binding residues include His187 and His193. Residues Cys287–Ala399 form the CUB domain.

Requires Zn(2+) as cofactor. In terms of tissue distribution, expressed in ovary and gonads.

The protein localises to the cytoplasm. The protein resides in the cell membrane. It is found in the cytoplasmic vesicle. It localises to the secretory vesicle. Its subcellular location is the cortical granule. Its function is as follows. Probable oocyte-specific oolemmal receptor involved in sperm and egg adhesion and fertilization. May act as a protease. The protein is Astacin-like metalloendopeptidase (ASTL) of Gallus gallus (Chicken).